Here is a 534-residue protein sequence, read N- to C-terminus: Glucose-6-phosphate isomerase (534 aa).

E356 functions as the Proton donor in the catalytic mechanism. Residues H387 and K502 contribute to the active site.

Belongs to the GPI family.

Its subcellular location is the cytoplasm. The enzyme catalyses alpha-D-glucose 6-phosphate = beta-D-fructose 6-phosphate. The protein operates within carbohydrate biosynthesis; gluconeogenesis. It participates in carbohydrate degradation; glycolysis; D-glyceraldehyde 3-phosphate and glycerone phosphate from D-glucose: step 2/4. Functionally, catalyzes the reversible isomerization of glucose-6-phosphate to fructose-6-phosphate. This chain is Glucose-6-phosphate isomerase, found in Desulfotalea psychrophila (strain LSv54 / DSM 12343).